Here is a 290-residue protein sequence, read N- to C-terminus: Xyloglucan endotransglucosylase/hydrolase protein 3 (290 aa).

A signal peptide spans 1–21 (MDYMRIFSVFVVTLWIIRVDA). In terms of domain architecture, GH16 spans 22 to 220 (RVFGGRGIEK…WSYSPFIAHF (199 aa)). The active-site Nucleophile is the E109. E113 (proton donor) is an active-site residue. Residues E113, 126–128 (QTN), 136–138 (NRE), 199–200 (DW), and G204 contribute to the xyloglucan site. N210 carries an N-linked (GlcNAc...) asparagine glycan. Cystine bridges form between C228/C240 and C276/C289.

Belongs to the glycosyl hydrolase 16 family. XTH group 1 subfamily. Post-translationally, contains at least one intrachain disulfide bond essential for its enzymatic activity. In terms of tissue distribution, predominantly expressed in flower buds.

It is found in the secreted. The protein resides in the cell wall. It localises to the extracellular space. The protein localises to the apoplast. The enzyme catalyses breaks a beta-(1-&gt;4) bond in the backbone of a xyloglucan and transfers the xyloglucanyl segment on to O-4 of the non-reducing terminal glucose residue of an acceptor, which can be a xyloglucan or an oligosaccharide of xyloglucan.. Its function is as follows. Catalyzes xyloglucan endohydrolysis (XEH) and/or endotransglycosylation (XET). Cleaves and religates xyloglucan polymers, an essential constituent of the primary cell wall, and thereby participates in cell wall construction of growing tissues. The protein is Xyloglucan endotransglucosylase/hydrolase protein 3 (XTH3) of Arabidopsis thaliana (Mouse-ear cress).